Here is a 26-residue protein sequence, read N- to C-terminus: Thrombopoietin (26 aa).

Belongs to the EPO/TPO family.

It is found in the secreted. In terms of biological role, lineage-specific cytokine affecting the proliferation and maturation of megakaryocytes from their committed progenitor cells. It acts at a late stage of megakaryocyte development. It may be the major physiological regulator of circulating platelets. This is Thrombopoietin (THPO) from Sus scrofa (Pig).